A 398-amino-acid polypeptide reads, in one-letter code: Phosphoglycerate kinase (398 aa).

Substrate-binding positions include 22 to 24 (DFN), Arg38, 61 to 64 (HLGR), Arg120, and Arg153. ATP is bound by residues Lys206, Gly297, Glu328, and 354 to 357 (GGDT).

It belongs to the phosphoglycerate kinase family. In terms of assembly, monomer.

It is found in the cytoplasm. It catalyses the reaction (2R)-3-phosphoglycerate + ATP = (2R)-3-phospho-glyceroyl phosphate + ADP. It functions in the pathway carbohydrate degradation; glycolysis; pyruvate from D-glyceraldehyde 3-phosphate: step 2/5. This chain is Phosphoglycerate kinase, found in Nautilia profundicola (strain ATCC BAA-1463 / DSM 18972 / AmH).